The chain runs to 361 residues: ATP phosphoribosyltransferase regulatory subunit (361 aa).

The protein belongs to the class-II aminoacyl-tRNA synthetase family. HisZ subfamily. In terms of assembly, heteromultimer composed of HisG and HisZ subunits.

The protein resides in the cytoplasm. The protein operates within amino-acid biosynthesis; L-histidine biosynthesis; L-histidine from 5-phospho-alpha-D-ribose 1-diphosphate: step 1/9. In terms of biological role, required for the first step of histidine biosynthesis. May allow the feedback regulation of ATP phosphoribosyltransferase activity by histidine. The protein is ATP phosphoribosyltransferase regulatory subunit of Thermus thermophilus (strain ATCC 27634 / DSM 579 / HB8).